A 326-amino-acid chain; its full sequence is Ribosome biogenesis protein BRX1 homolog (326 aa).

Residues 1-17 (MVKPSKILEKIKKRTEP) are compositionally biased toward basic and acidic residues. Residues 1-66 (MVKPSKILEK…EENKNIEENK (66 aa)) are disordered. Over residues 22 to 57 (VVEEESDEEIIEQEGSEEEEEIVEEESEEEEEEVEE) the composition is skewed to acidic residues. In terms of domain architecture, Brix spans 75 to 268 (KRVLFTSTRG…IDKIFSDGFG (194 aa)).

Belongs to the BRX1 family.

The protein localises to the nucleus. Its subcellular location is the nucleolus. Its function is as follows. Required for biogenesis of the 60S ribosomal subunit. The chain is Ribosome biogenesis protein BRX1 homolog (bxdc2) from Dictyostelium discoideum (Social amoeba).